Consider the following 511-residue polypeptide: Vesicular acetylcholine transporter (511 aa).

Over M1–K36 the chain is Cytoplasmic. Residues I37–V57 form a helical membrane-spanning segment. Topologically, residues P58 to G108 are lumenal, vesicle. N80, N83, and N88 each carry an N-linked (GlcNAc...) asparagine glycan. Residues V109 to I129 traverse the membrane as a helical segment. Residues D130–D135 are Cytoplasmic-facing. Residues I136 to E156 traverse the membrane as a helical segment. The Lumenal, vesicle portion of the chain corresponds to S157–R165. Residues S166–K186 traverse the membrane as a helical segment. The Cytoplasmic portion of the chain corresponds to Y187–L197. The helical transmembrane segment at G198 to L218 threads the bilayer. At Y219–W225 the chain is on the lumenal, vesicle side. Residues V226–V246 form a helical membrane-spanning segment. The Cytoplasmic portion of the chain corresponds to T247–M267. A helical transmembrane segment spans residues I268 to F288. Over L289–W306 the chain is Lumenal, vesicle. A glycan (N-linked (GlcNAc...) asparagine) is linked at N302. The chain crosses the membrane as a helical span at residues Q307–V327. Residues K328 to Q337 lie on the Cytoplasmic side of the membrane. A helical transmembrane segment spans residues W338–C358. At R359–E363 the chain is on the lumenal, vesicle side. Residues L364–P384 form a helical membrane-spanning segment. At T385 to S400 the chain is on the cytoplasmic side. The chain crosses the membrane as a helical span at residues V401–G421. At Q422–G428 the chain is on the lumenal, vesicle side. The helical transmembrane segment at F429 to F449 threads the bilayer. The Cytoplasmic portion of the chain corresponds to L450–E511. The disordered stretch occupies residues A486–E511.

It belongs to the major facilitator superfamily. Vesicular transporter family. In terms of tissue distribution, high expression in the electric lobe of the brain.

The protein resides in the membrane. Functionally, involved in acetylcholine transport into synaptic vesicles. This is Vesicular acetylcholine transporter from Torpedo torpedo (Common torpedo).